The chain runs to 399 residues: DNA primase DnaG (399 aa).

One can recognise a Toprim domain in the interval 182–268 (DAIIVVEGRA…EVEDLTQKEI (87 aa)). Glu-188, Asp-230, and Asp-232 together coordinate Mg(2+).

It belongs to the archaeal DnaG primase family. In terms of assembly, forms a ternary complex with MCM helicase and DNA. Component of the archaeal exosome complex. The cofactor is Mg(2+).

The catalysed reaction is ssDNA + n NTP = ssDNA/pppN(pN)n-1 hybrid + (n-1) diphosphate.. In terms of biological role, RNA polymerase that catalyzes the synthesis of short RNA molecules used as primers for DNA polymerase during DNA replication. Also part of the exosome, which is a complex involved in RNA degradation. Acts as a poly(A)-binding protein that enhances the interaction between heteromeric, adenine-rich transcripts and the exosome. The chain is DNA primase DnaG from Archaeoglobus fulgidus (strain ATCC 49558 / DSM 4304 / JCM 9628 / NBRC 100126 / VC-16).